We begin with the raw amino-acid sequence, 90 residues long: Acylphosphatase (90 aa).

Positions 3-90 (QYRIIVDGRV…DGFQKFNISY (88 aa)) constitute an Acylphosphatase-like domain. Catalysis depends on residues arginine 18 and asparagine 36.

It belongs to the acylphosphatase family.

It catalyses the reaction an acyl phosphate + H2O = a carboxylate + phosphate + H(+). This chain is Acylphosphatase (acyP), found in Bacillus licheniformis (strain ATCC 14580 / DSM 13 / JCM 2505 / CCUG 7422 / NBRC 12200 / NCIMB 9375 / NCTC 10341 / NRRL NRS-1264 / Gibson 46).